Reading from the N-terminus, the 300-residue chain is N-acetylmuramic acid 6-phosphate etherase (300 aa).

The SIS domain maps to 55 to 217 (IAERLRAGGR…STGAMIRLGK (163 aa)). The active-site Proton donor is the E83. The active site involves E114.

This sequence belongs to the GCKR-like family. MurNAc-6-P etherase subfamily. As to quaternary structure, homodimer.

The enzyme catalyses N-acetyl-D-muramate 6-phosphate + H2O = N-acetyl-D-glucosamine 6-phosphate + (R)-lactate. It participates in amino-sugar metabolism; N-acetylmuramate degradation. Functionally, specifically catalyzes the cleavage of the D-lactyl ether substituent of MurNAc 6-phosphate, producing GlcNAc 6-phosphate and D-lactate. This is N-acetylmuramic acid 6-phosphate etherase from Symbiobacterium thermophilum (strain DSM 24528 / JCM 14929 / IAM 14863 / T).